Reading from the N-terminus, the 335-residue chain is UPF0104 membrane protein PH1989 (335 aa).

Helical transmembrane passes span 4 to 24, 34 to 54, 62 to 82, 122 to 142, 148 to 168, 231 to 251, 266 to 286, and 304 to 324; these read YLLI…AGIE, DIRF…IWAV, GANI…GIFL, ILDV…ALTI, LIIL…TTVF, LYSF…FLSL, ASIA…TEVV, and VTML…GILV.

Belongs to the UPF0104 family.

The protein resides in the cell membrane. This Pyrococcus horikoshii (strain ATCC 700860 / DSM 12428 / JCM 9974 / NBRC 100139 / OT-3) protein is UPF0104 membrane protein PH1989.